Here is a 349-residue protein sequence, read N- to C-terminus: PDZ and LIM domain protein 2 (349 aa).

The 84-residue stretch at 1–84 (MALTVDVAGP…PLRLQLDRSQ (84 aa)) folds into the PDZ domain. A disordered region spans residues 74-147 (SPLRLQLDRS…TPPPTSPVAL (74 aa)). The span at 81–94 (DRSQTASPGQTNGE) shows a compositional bias: polar residues. Residues serine 124, serine 127, serine 129, serine 134, and serine 137 each carry the phosphoserine modification. Residues threonine 138 and threonine 142 each carry the phosphothreonine modification. Phosphoserine occurs at positions 143 and 163. Positions 169–212 (AHHLTYPGHPTSQQAGHSSPSDSAVRVLLHSPGRPSSPRFSSLD) are disordered. Positions 178–190 (PTSQQAGHSSPSD) are enriched in polar residues. Serine 199, serine 204, serine 205, serine 209, serine 210, and serine 263 each carry phosphoserine. Over residues 199–210 (SPGRPSSPRFSS) the composition is skewed to low complexity. The 61-residue stretch at 281-341 (HTCEKCSVNI…EKHARQRYSM (61 aa)) folds into the LIM zinc-binding domain.

As to quaternary structure, interacts with alpha-actinins ACTN1 and ACTN4, FLNA and MYH9. Interacts (via LIM zinc-binding domain) with MKRN2. As to expression, highly expressed in lung. Expressed at intermediate level in kidney, testis and spleen. Weakly expressed in heart and brain.

The protein localises to the cytoplasm. The protein resides in the cytoskeleton. Functionally, probable adapter protein located at the actin cytoskeleton that promotes cell attachment. Necessary for the migratory capacity of epithelial cells. Overexpression enhances cell adhesion to collagen and fibronectin and suppresses anchorage independent growth. May contribute to tumor cell migratory capacity. The sequence is that of PDZ and LIM domain protein 2 (Pdlim2) from Mus musculus (Mouse).